The sequence spans 314 residues: Protein phosphatase PTC7 homolog fig (314 aa).

The PPM-type phosphatase domain occupies 43–309 (PYLVTVVQGR…DDITLILSSV (267 aa)). The Mn(2+) site is built by aspartate 87, glycine 88, and aspartate 232.

The protein belongs to the PP2C family. The cofactor is Mg(2+). It depends on Mn(2+) as a cofactor.

It carries out the reaction O-phospho-L-seryl-[protein] + H2O = L-seryl-[protein] + phosphate. The catalysed reaction is O-phospho-L-threonyl-[protein] + H2O = L-threonyl-[protein] + phosphate. The polypeptide is Protein phosphatase PTC7 homolog fig (Drosophila melanogaster (Fruit fly)).